The primary structure comprises 239 residues: Peptidyl-tRNA hydrolase (239 aa).

Position 14 (tyrosine 14) interacts with tRNA. Histidine 19 (proton acceptor) is an active-site residue. The tRNA site is built by phenylalanine 64, asparagine 66, and asparagine 112. Residues 188–225 (GGKPDAEEPQAPKKQVGQSHIHKARNAAQPKKLPATGP) form a disordered region.

It belongs to the PTH family. In terms of assembly, monomer.

The protein resides in the cytoplasm. It catalyses the reaction an N-acyl-L-alpha-aminoacyl-tRNA + H2O = an N-acyl-L-amino acid + a tRNA + H(+). Its function is as follows. Hydrolyzes ribosome-free peptidyl-tRNAs (with 1 or more amino acids incorporated), which drop off the ribosome during protein synthesis, or as a result of ribosome stalling. In terms of biological role, catalyzes the release of premature peptidyl moieties from peptidyl-tRNA molecules trapped in stalled 50S ribosomal subunits, and thus maintains levels of free tRNAs and 50S ribosomes. This is Peptidyl-tRNA hydrolase from Sinorhizobium fredii (strain NBRC 101917 / NGR234).